Reading from the N-terminus, the 227-residue chain is MFDLSDQLITMGLWSISIGAFGAAVAGILLANTDFFLSQTEKATLDYLEETELKTIGEEPRLFKAKDLWERDGAVIMAVRRPGCFLCREEASGLSTLKPQLDQLGVPLYAIVKENIGNEVEHFQPYFNGKVFLDAKGQFYGPQKRKMMLLGLVRLGVWQNFRRAWKGGFEGNLEGEGLILGGMFVIGSGKQGILLEHREKEFGDKANLTAVLDAARKISKQTAQNDN.

Residues 13–111 (LWSISIGAFG…DQLGVPLYAI (99 aa)) are thioredoxin fold. Active-site redox-active residues include Cys84 and Cys87.

The protein belongs to the peroxiredoxin-like PRXL2 family. PRXL2A subfamily.

It localises to the cytoplasm. In terms of biological role, involved in redox regulation of the cell. Acts as an antioxidant. This Xenopus laevis (African clawed frog) protein is Peroxiredoxin-like 2A (prxl2a).